The primary structure comprises 434 residues: Methylenetetrahydrofolate--tRNA-(uracil-5-)-methyltransferase TrmFO (434 aa).

9 to 14 (GAGLAG) provides a ligand contact to FAD.

The protein belongs to the MnmG family. TrmFO subfamily. FAD serves as cofactor.

The protein resides in the cytoplasm. The catalysed reaction is uridine(54) in tRNA + (6R)-5,10-methylene-5,6,7,8-tetrahydrofolate + NADH + H(+) = 5-methyluridine(54) in tRNA + (6S)-5,6,7,8-tetrahydrofolate + NAD(+). It catalyses the reaction uridine(54) in tRNA + (6R)-5,10-methylene-5,6,7,8-tetrahydrofolate + NADPH + H(+) = 5-methyluridine(54) in tRNA + (6S)-5,6,7,8-tetrahydrofolate + NADP(+). In terms of biological role, catalyzes the folate-dependent formation of 5-methyl-uridine at position 54 (M-5-U54) in all tRNAs. In Listeria welshimeri serovar 6b (strain ATCC 35897 / DSM 20650 / CCUG 15529 / CIP 8149 / NCTC 11857 / SLCC 5334 / V8), this protein is Methylenetetrahydrofolate--tRNA-(uracil-5-)-methyltransferase TrmFO.